The primary structure comprises 167 residues: Probable membrane-bound hydrogenase subunit mbhJ (167 aa).

Positions 35, 38, 102, and 132 each coordinate [4Fe-4S] cluster.

This sequence belongs to the complex I 20 kDa subunit family. In terms of assembly, the membrane-bound hydrogenase complex is composed of MbhK and MbhL, but may also contain MbhJ. It depends on [4Fe-4S] cluster as a cofactor.

The protein resides in the cell membrane. It carries out the reaction H2 + 2 oxidized [2Fe-2S]-[ferredoxin] = 2 reduced [2Fe-2S]-[ferredoxin] + 2 H(+). Its activity is regulated as follows. Inhibited by 0.1 mM Cu(2+). In terms of biological role, probable subunit of a hydrogen-evolving hydrogenase that utilizes protons both as a substrate for hydrogen production and proton translocation. Acts by coupling the redox reaction via ferredoxin and iron-sulfur (Fe-S) clusters to proton translocation across the membrane, thereby conserving the redox energy in a proton gradient. The sequence is that of Probable membrane-bound hydrogenase subunit mbhJ from Pyrococcus furiosus (strain ATCC 43587 / DSM 3638 / JCM 8422 / Vc1).